Reading from the N-terminus, the 415-residue chain is Gamma-glutamyl phosphate reductase (415 aa).

The protein belongs to the gamma-glutamyl phosphate reductase family.

The protein resides in the cytoplasm. The enzyme catalyses L-glutamate 5-semialdehyde + phosphate + NADP(+) = L-glutamyl 5-phosphate + NADPH + H(+). It functions in the pathway amino-acid biosynthesis; L-proline biosynthesis; L-glutamate 5-semialdehyde from L-glutamate: step 2/2. Functionally, catalyzes the NADPH-dependent reduction of L-glutamate 5-phosphate into L-glutamate 5-semialdehyde and phosphate. The product spontaneously undergoes cyclization to form 1-pyrroline-5-carboxylate. This Bacillus cereus (strain AH187) protein is Gamma-glutamyl phosphate reductase.